A 160-amino-acid polypeptide reads, in one-letter code: SsrA-binding protein (160 aa).

Residues 135–160 are disordered; the sequence is KTHDKRETIKERDWKREQSRILRDRG. The segment covering 138–160 has biased composition (basic and acidic residues); that stretch reads DKRETIKERDWKREQSRILRDRG.

The protein belongs to the SmpB family.

Its subcellular location is the cytoplasm. Required for rescue of stalled ribosomes mediated by trans-translation. Binds to transfer-messenger RNA (tmRNA), required for stable association of tmRNA with ribosomes. tmRNA and SmpB together mimic tRNA shape, replacing the anticodon stem-loop with SmpB. tmRNA is encoded by the ssrA gene; the 2 termini fold to resemble tRNA(Ala) and it encodes a 'tag peptide', a short internal open reading frame. During trans-translation Ala-aminoacylated tmRNA acts like a tRNA, entering the A-site of stalled ribosomes, displacing the stalled mRNA. The ribosome then switches to translate the ORF on the tmRNA; the nascent peptide is terminated with the 'tag peptide' encoded by the tmRNA and targeted for degradation. The ribosome is freed to recommence translation, which seems to be the essential function of trans-translation. This Sphingomonas elodea protein is SsrA-binding protein.